The primary structure comprises 450 residues: N-lysine methyltransferase SETD6 (450 aa).

Over residues 1–10 the composition is skewed to basic residues; the sequence is MATQAKRRRV. Residues 1–20 are disordered; it reads MATQAKRRRVAGPAGSDDDP. The SET domain maps to 39–263; it reads PKVAVSRQGT…KGHEIFNTYG (225 aa). Residue Lys40 is modified to N6-methylated lysine; by autocatalysis. 50–52 lines the S-adenosyl-L-methionine pocket; it reads AGY. Trp99 lines the substrate pocket. An N6-methylated lysine; by autocatalysis modification is found at Lys156. Tyr200 provides a ligand contact to S-adenosyl-L-methionine. Residues Ser201 and Gln203 each contribute to the substrate site. Residues 228–229 and Tyr274 contribute to the S-adenosyl-L-methionine site; that span reads NH. Lys349 carries the post-translational modification N6-methylated lysine; by autocatalysis.

The protein belongs to the class V-like SAM-binding methyltransferase superfamily. Histone-lysine methyltransferase family. SETD6 subfamily. As to quaternary structure, monomer, homodimer and homotrimer; these structures are stabilized in the presence of S-adenosyl-L-methionine (SAM). Post-translationally, automethylated.

The protein localises to the nucleus. It catalyses the reaction L-lysyl-[protein] + S-adenosyl-L-methionine = N(6)-methyl-L-lysyl-[protein] + S-adenosyl-L-homocysteine + H(+). The enzyme catalyses L-lysyl(8)-[histone H2AZ] + S-adenosyl-L-methionine = N(6)-methyl-L-lysyl(8)-[histone H2AZ] + S-adenosyl-L-homocysteine + H(+). In terms of biological role, protein-lysine N-methyltransferase. Monomethylates 'Lys-310' of the RELA subunit of NF-kappa-B complex, leading to down-regulation of NF-kappa-B transcription factor activity. Monomethylates 'Lys-8' of H2AZ (H2AZK8me1). Required for the maintenance of embryonic stem cell self-renewal. Methylates PAK4. This Bos taurus (Bovine) protein is N-lysine methyltransferase SETD6 (SETD6).